We begin with the raw amino-acid sequence, 979 residues long: Glucose transport transcription regulator RGT1 (979 aa).

Basic and acidic residues-rich tracts occupy residues 1 to 14 (MSASRRESEPKEAE), 36 to 47 (DQCREKKTRCDF), and 105 to 114 (FKGDAGRPRA). 6 disordered regions span residues 1–47 (MSAS…RCDF), 65–142 (TFER…LAPG), 165–219 (IDSL…EDCR), 249–380 (LPQQ…SIES), 563–590 (DTEASENEDEAGAGDAHASGTPERGKSA), and 926–954 (APESVKTPSSQPPSSSPGPNSDGSNNTSL). The zn(2)-C6 fungal-type DNA-binding region spans 35-64 (CDQCREKKTRCDFSDERPICSACQRMGKTC). Positions 132–142 (QPRLQPLLAPG) are enriched in low complexity. Composition is skewed to polar residues over residues 170–179 (SDVSNRNGSE) and 186–207 (SNASSGSQFYPASQAQYASQLP). Low complexity predominate over residues 251 to 263 (QQQQQQQQQNAQQ). Over residues 280–295 (EHFKEFDEGFHSRKGS) the composition is skewed to basic and acidic residues. Low complexity predominate over residues 296-309 (DVSVAVSPSSPVQV). Polar residues predominate over residues 310-329 (TRTQQAGLNSESRDTNTATA). Basic residues predominate over residues 358 to 368 (GPRKQKRKNSN). Positions 369-380 (RNKPGSQSSIES) are enriched in low complexity. Over residues 565–574 (EASENEDEAG) the composition is skewed to acidic residues. Residues 942 to 953 (PGPNSDGSNNTS) show a composition bias toward low complexity.

Belongs to the EDS1/RGT1 family.

It is found in the nucleus. The protein localises to the cytoplasm. Its function is as follows. Glucose-responsive transcription factor that regulates expression of several glucose transporter (HXT) genes in response to glucose. In the absence of glucose, it functions as a transcriptional repressor, whereas high concentrations of glucose cause it to function as a transcriptional activator. In cells growing on low levels of glucose, has a neutral role, neither repressing nor activating transcription. This Lachancea thermotolerans (strain ATCC 56472 / CBS 6340 / NRRL Y-8284) (Yeast) protein is Glucose transport transcription regulator RGT1 (RGT1).